The sequence spans 608 residues: Probable potassium transport system protein Kup (608 aa).

12 helical membrane-spanning segments follow: residues Leu-9 to Leu-29, Pro-46 to Val-66, Thr-99 to Ile-119, Pro-137 to Ile-157, Val-165 to Leu-185, Thr-213 to Ala-233, Trp-247 to Leu-267, Ala-285 to Ile-305, Ile-337 to Phe-357, Leu-363 to Cys-383, Leu-396 to Leu-416, and Ile-419 to Ser-439.

This sequence belongs to the HAK/KUP transporter (TC 2.A.72) family.

Its subcellular location is the cell inner membrane. It catalyses the reaction K(+)(in) + H(+)(in) = K(+)(out) + H(+)(out). Transport of potassium into the cell. Likely operates as a K(+):H(+) symporter. This Aeromonas salmonicida (strain A449) protein is Probable potassium transport system protein Kup.